Here is a 379-residue protein sequence, read N- to C-terminus: Oxysterol-binding protein-related protein 4C (379 aa).

The protein belongs to the OSBP family. As to expression, expressed in flowers.

Its function is as follows. May be involved in the transport of sterols. The sequence is that of Oxysterol-binding protein-related protein 4C (ORP4C) from Arabidopsis thaliana (Mouse-ear cress).